A 283-amino-acid polypeptide reads, in one-letter code: Pantothenate synthetase (283 aa).

Residue 30-37 (MGNLHQGH) participates in ATP binding. Histidine 37 serves as the catalytic Proton donor. A (R)-pantoate-binding site is contributed by glutamine 61. Glutamine 61 contributes to the beta-alanine binding site. 149 to 152 (GEKD) provides a ligand contact to ATP. Residue glutamine 155 coordinates (R)-pantoate. ATP is bound by residues valine 178 and 186–189 (FSSR).

Belongs to the pantothenate synthetase family. Homodimer.

Its subcellular location is the cytoplasm. The catalysed reaction is (R)-pantoate + beta-alanine + ATP = (R)-pantothenate + AMP + diphosphate + H(+). It functions in the pathway cofactor biosynthesis; (R)-pantothenate biosynthesis; (R)-pantothenate from (R)-pantoate and beta-alanine: step 1/1. Functionally, catalyzes the condensation of pantoate with beta-alanine in an ATP-dependent reaction via a pantoyl-adenylate intermediate. The protein is Pantothenate synthetase of Proteus mirabilis (strain HI4320).